The following is a 146-amino-acid chain: UPF0735 ACT domain-containing protein TTE2621 (146 aa).

An ACT domain is found at 71–146; sequence TFSMVLEHMP…GVRKIEVLGE (76 aa).

The protein belongs to the UPF0735 family.

The polypeptide is UPF0735 ACT domain-containing protein TTE2621 (Caldanaerobacter subterraneus subsp. tengcongensis (strain DSM 15242 / JCM 11007 / NBRC 100824 / MB4) (Thermoanaerobacter tengcongensis)).